We begin with the raw amino-acid sequence, 632 residues long: MHGLLLAGLAAALPLGVAGLPARQQSGLSPRGIDINPYRFASMAKYSEHKATSQMVHSFSYSKDDDYVATATKLVKSTFPNMTFRTVKDHYIGTNGIGHVHFKQTAHGIDIDNADFNVNIGRDGKVFTFGNSFYEGEMPKTNPLTKRDFSDPVKALHGAIKTLKLPVKPQSAKAMPMKEAETFKFEGTSGALSDPMAKLVYIQKDGKLHLTWRVETDVGDNWLLSYVDSKETETVHNVVDYVASADYKVFAWGLNDPTEGQPTMIKDPWNTTGTGSPFTWHGDGQMDYTVTRGNNIAAQDNPSGGEQWENNYRPDSPELSFVYEYNEQMEPEQYKDFAITQLFYTTNTFHDVLYSLGFTEEAGNFQMNNNGKGGEGNDFAICNAQDGSGTNNANFATPPDGQNGRMRMYTWTTAQPSRDGDLEAGIVIHEYTHGLSNRLCGGPANSNCLTELEAGGMGEGWGDFYATAIRLKQDDTHDTDYTMGEWAANMQGGIREYPYSTNMQTNPYTYADVQGMDEVHGIGTVWATILYEVLWNLIDEHGMSKNIMPKFVNGAPSDGRNLAMKLVLDGMTLMPCNPNFMQARDAIIDADQALTNGQNKCALMKAFSKRGLGANYKHGKTRVNNFDMPADC.

A signal peptide spans 1–19 (MHGLLLAGLAAALPLGVAG). Positions 20-244 (LPARQQSGLS…VHNVVDYVAS (225 aa)) are excised as a propeptide. Residues Asn81 and Asn270 are each glycosylated (N-linked (GlcNAc...) asparagine). Residue His429 coordinates Zn(2+). Glu430 is a catalytic residue. Zn(2+) is bound at residue His433.

This sequence belongs to the peptidase M36 family. Zn(2+) is required as a cofactor.

Its subcellular location is the secreted. Its function is as follows. Secreted metalloproteinase probably acting as a virulence factor. This Arthroderma benhamiae (strain ATCC MYA-4681 / CBS 112371) (Trichophyton mentagrophytes) protein is Probable extracellular metalloproteinase 2 (MEP2).